The primary structure comprises 947 residues: Bifunctional glutamine synthetase adenylyltransferase/adenylyl-removing enzyme (947 aa).

An adenylyl removase region spans residues 1–440 (MTPLSSPLSQ…VFNELIGDDE (440 aa)). An adenylyl transferase region spans residues 450 to 947 (SEPWRDVWQD…ASWRKWLVAV (498 aa)).

Belongs to the GlnE family. The cofactor is Mg(2+).

The enzyme catalyses [glutamine synthetase]-O(4)-(5'-adenylyl)-L-tyrosine + phosphate = [glutamine synthetase]-L-tyrosine + ADP. The catalysed reaction is [glutamine synthetase]-L-tyrosine + ATP = [glutamine synthetase]-O(4)-(5'-adenylyl)-L-tyrosine + diphosphate. In terms of biological role, involved in the regulation of glutamine synthetase GlnA, a key enzyme in the process to assimilate ammonia. When cellular nitrogen levels are high, the C-terminal adenylyl transferase (AT) inactivates GlnA by covalent transfer of an adenylyl group from ATP to specific tyrosine residue of GlnA, thus reducing its activity. Conversely, when nitrogen levels are low, the N-terminal adenylyl removase (AR) activates GlnA by removing the adenylyl group by phosphorolysis, increasing its activity. The regulatory region of GlnE binds the signal transduction protein PII (GlnB) which indicates the nitrogen status of the cell. The chain is Bifunctional glutamine synthetase adenylyltransferase/adenylyl-removing enzyme from Salmonella dublin (strain CT_02021853).